The following is a 413-amino-acid chain: Serine hydroxymethyltransferase (413 aa).

Residues Leu117 and Gly121–Leu123 each bind (6S)-5,6,7,8-tetrahydrofolate. Position 226 is an N6-(pyridoxal phosphate)lysine (Lys226). (6S)-5,6,7,8-tetrahydrofolate-binding positions include Glu239 and Ser349–Phe351.

It belongs to the SHMT family. Homodimer. Requires pyridoxal 5'-phosphate as cofactor.

Its subcellular location is the cytoplasm. It carries out the reaction (6R)-5,10-methylene-5,6,7,8-tetrahydrofolate + glycine + H2O = (6S)-5,6,7,8-tetrahydrofolate + L-serine. Its pathway is one-carbon metabolism; tetrahydrofolate interconversion. It participates in amino-acid biosynthesis; glycine biosynthesis; glycine from L-serine: step 1/1. Catalyzes the reversible interconversion of serine and glycine with tetrahydrofolate (THF) serving as the one-carbon carrier. This reaction serves as the major source of one-carbon groups required for the biosynthesis of purines, thymidylate, methionine, and other important biomolecules. Also exhibits THF-independent aldolase activity toward beta-hydroxyamino acids, producing glycine and aldehydes, via a retro-aldol mechanism. The polypeptide is Serine hydroxymethyltransferase (Bacillus cytotoxicus (strain DSM 22905 / CIP 110041 / 391-98 / NVH 391-98)).